Consider the following 292-residue polypeptide: Quinolinate synthase (292 aa).

2 residues coordinate iminosuccinate: histidine 8 and serine 25. Cysteine 70 lines the [4Fe-4S] cluster pocket. Residues 96–98 (YVN) and serine 113 contribute to the iminosuccinate site. Residue cysteine 158 coordinates [4Fe-4S] cluster. Residues 184–186 (HPE) and threonine 201 each bind iminosuccinate. Cysteine 244 contributes to the [4Fe-4S] cluster binding site.

It belongs to the quinolinate synthase family. Type 2 subfamily. Requires [4Fe-4S] cluster as cofactor.

The protein localises to the cytoplasm. The catalysed reaction is iminosuccinate + dihydroxyacetone phosphate = quinolinate + phosphate + 2 H2O + H(+). It participates in cofactor biosynthesis; NAD(+) biosynthesis; quinolinate from iminoaspartate: step 1/1. Catalyzes the condensation of iminoaspartate with dihydroxyacetone phosphate to form quinolinate. In Methanopyrus kandleri (strain AV19 / DSM 6324 / JCM 9639 / NBRC 100938), this protein is Quinolinate synthase (nadA).